The chain runs to 280 residues: 4-hydroxy-tetrahydrodipicolinate reductase (280 aa).

Residues 14–19 (GAAGRM), Asp-40, 106–108 (ATT), and 130–133 (APSM) contribute to the NAD(+) site. His-166 acts as the Proton donor/acceptor in catalysis. A (S)-2,3,4,5-tetrahydrodipicolinate-binding site is contributed by His-167. Lys-170 functions as the Proton donor in the catalytic mechanism. 176–177 (GT) lines the (S)-2,3,4,5-tetrahydrodipicolinate pocket.

It belongs to the DapB family.

It is found in the cytoplasm. The enzyme catalyses (S)-2,3,4,5-tetrahydrodipicolinate + NAD(+) + H2O = (2S,4S)-4-hydroxy-2,3,4,5-tetrahydrodipicolinate + NADH + H(+). The catalysed reaction is (S)-2,3,4,5-tetrahydrodipicolinate + NADP(+) + H2O = (2S,4S)-4-hydroxy-2,3,4,5-tetrahydrodipicolinate + NADPH + H(+). It functions in the pathway amino-acid biosynthesis; L-lysine biosynthesis via DAP pathway; (S)-tetrahydrodipicolinate from L-aspartate: step 4/4. Catalyzes the conversion of 4-hydroxy-tetrahydrodipicolinate (HTPA) to tetrahydrodipicolinate. In Rhodopirellula baltica (strain DSM 10527 / NCIMB 13988 / SH1), this protein is 4-hydroxy-tetrahydrodipicolinate reductase.